We begin with the raw amino-acid sequence, 205 residues long: Urease accessory protein UreG (205 aa).

10-17 (GPVGSGKT) contributes to the GTP binding site.

It belongs to the SIMIBI class G3E GTPase family. UreG subfamily. As to quaternary structure, homodimer. UreD, UreF and UreG form a complex that acts as a GTP-hydrolysis-dependent molecular chaperone, activating the urease apoprotein by helping to assemble the nickel containing metallocenter of UreC. The UreE protein probably delivers the nickel.

The protein localises to the cytoplasm. Its function is as follows. Facilitates the functional incorporation of the urease nickel metallocenter. This process requires GTP hydrolysis, probably effectuated by UreG. In Corynebacterium urealyticum (strain ATCC 43042 / DSM 7109), this protein is Urease accessory protein UreG.